The sequence spans 1132 residues: MASGSRTKHSHQSGQGQVQAQSSGTSNVNYKDSISKAIAQYTADARLHAVFEQSGESGKSFDYSQSIKTTTQSVVPEQQITAYLTKIQRGGHIQPFGCMIAVDEASFRVIAYSENACEMLSLTPQSVPSLERPEILTVGTDVRTLFTPSSSVLLERAFGAREITLLNPIWIHSKNSGKPFYAILHRVDVGIVIDLEPARTEDPALSIAGAVQSQKLAVRAISHLQSLPGGDVKLLCDTVVESVRELTGYDRVMVYKFHEDEHGEVVAESKIPDLEPYIGLHYPATDIPQASRFLFKQNRVRMIVDCHATPVRVVQDESLMQPLCLVGSTLRAPHGCHAQYMANMGSIASLTLAVIINGNDEEAVGGRSSMRLWGLVVGHHTSARCIPFPLRYACEFLMQAFGLQLNMELQLASQLSEKHVLRTQTLLCDMLLRDSPTGIVIQSPSIMDLVKCDGAALYCQGKYYPLGVTPTEAQIKDIVEWLLTYHGDSTGLSTDSLADAGYPGAALLGDAVCGMAVAYITSKDFLFWFRSHTAKEIKWGGAKHHPEDKDDGQRMHPRSSFKAFLEVVKSRSLPWENAEMDAIHSLLILRDSFKDAEASNSKAVVHAQLGEMELQGIDELSSVAREMVRLIETATAPIFAVDVEGRINGWNAKVAELTDLSVEEAMGKSLVHDLVHKESQETAEKLLFNALRGEEDKNVEIKLRTFGPEQLKKAVFVVVNACSSKDYTNNIVGVCFVGQDVTGQKVVMDKFIHIQGDYKAIVHSPNPLIPPIFASDENTCCSEWNTAMEKLTGWSRGEIIGKMLVGEIFGSCCRLKGPDAMTKFMIVLHNAIGVQDTDKFPFSFFDRNGKYVQALLTANKRVNMEGQIIGAFCFIQIASPELQQALRVQRQQEKKCYSQMKELAYLCQEIKSPLNGIRFTNSLLEATDLTENQKQYLETSAACERQMSKIIRDVDLENIEDGSLTLEKEEFFLGSVIDAVVSQVMLLLRERSVQLIRDIPEEIKTLTVHGDQVRIQQVLADFLLNMVRYAPSPDGWVEIQLQPNMKQISDEVTVVHIEFRIVCPGEGLPPELVQDMFHSSRWVTKEGLGLSMCRKILKLMNGDIQYIRESERCYFLIILDLPMTRRGSKSLG.

The segment covering 1-11 (MASGSRTKHSH) has biased composition (basic residues). The interval 1-27 (MASGSRTKHSHQSGQGQVQAQSSGTSN) is disordered. The span at 12–26 (QSGQGQVQAQSSGTS) shows a compositional bias: low complexity. The region spanning 231–409 (DVKLLCDTVV…AFGLQLNMEL (179 aa)) is the GAF domain. Cysteine 336 provides a ligand contact to phytochromobilin. PAS domains lie at 623 to 694 (VARE…LRGE) and 757 to 828 (DYKA…MIVL). The 221-residue stretch at 905–1125 (YLCQEIKSPL…LIILDLPMTR (221 aa)) folds into the Histidine kinase domain.

This sequence belongs to the phytochrome family. In terms of assembly, homodimer. Contains one covalently linked phytochromobilin chromophore.

Its function is as follows. Regulatory photoreceptor which exists in two forms that are reversibly interconvertible by light: the Pr form that absorbs maximally in the red region of the spectrum and the Pfr form that absorbs maximally in the far-red region. Photoconversion of Pr to Pfr induces an array of morphogenic responses, whereas reconversion of Pfr to Pr cancels the induction of those responses. Pfr controls the expression of a number of nuclear genes including those encoding the small subunit of ribulose-bisphosphate carboxylase, chlorophyll A/B binding protein, protochlorophyllide reductase, rRNA, etc. It also controls the expression of its own gene(s) in a negative feedback fashion. The protein is Phytochrome B (PHYB) of Nicotiana tabacum (Common tobacco).